Here is a 284-residue protein sequence, read N- to C-terminus: Circadian clock oscillator protein KaiA (284 aa).

The interval 1–135 (MLSQIAICIW…LRLAPVETMA (135 aa)) is psR domain, binds oxidized quinones. The 164-residue stretch at 1–164 (MLSQIAICIW…DLAQRLQERL (164 aa)) folds into the KaiA N-terminal domain. Positions 165 to 173 (GYLGVYYKR) are flexible linker. Residues 174-282 (DPDRFLRNLP…CEMYRRSIPR (109 aa)) form the KaiA C-terminal domain.

This sequence belongs to the KaiA family. Homodimer. The KaiABC complex composition changes during the circadian cycle to control KaiC phosphorylation. Complexes KaiC(6), KaiA(2-4):KaiC(6), KaiB(6):KaiC(6) and KaiC(6):KaiB(6):KaiA(12) are among the most important forms, many form cooperatively. The KaiA:KaiB complex is only found at 20-24 hours in the circadian cycle (subjective night). Binds to the C-terminal A-loop of KaiC via a coiled-coil structure. KaiA and CikA compete for binding to KaiB(fs). CikA copurifies with this protein in the clock complex. Interacts with LdpA.

Binding of oxidized quinones (produced as darkness falls) prevents KaiA from stimulating KaiC autophosphorylation. Functionally, key component of the KaiABC oscillator complex, which constitutes the main circadian regulator in cyanobacteria. Complex composition changes during the circadian cycle to control KaiC phosphorylation. KaiA stimulates KaiC autophosphorylation, while KaiB sequesters KaiA, leading to KaiC autodephosphorylation. KaiA binding to the KaiC CII domain during the subjective day yields KaiA(2-4):KaiC(6) complexes which stimulate KaiC autophosphorylation. A KaiA dimer is sufficient to enhance KaiC hexamer phosphorylation. Phospho-Ser-431 KaiC accumulation triggers binding of KaiB during the subjective night to form the KaiB(6):KaiC(6) complex, leading to changes in the output regulators CikA and SasA. KaiB(6):KaiC(6) formation exposes a site for KaiA binding on KaiB that sequesters KaiA from KaiC's CII domain, making the KaiC(6):KaiB(6):KaiA(12) complex resulting in KaiC autodephosphorylation. Complete dephosphorylation of KaiC leads to dissociation of KaiA(2):KaiB(1), completing 1 cycle of the Kai oscillator. In terms of biological role, circadian oscillations can be generated in vitro by incubating KaiA, KaiB and KaiC with 1 mM ATP. The cycle is self-sustainable for at least 3 cycles and resistant to temperature changes. A very robust clock is reconstituted with KaiA, KaiB, KaiC, SasA, CikA and RpaA; output is measured by transcription from an appropriate reporter. Its function is as follows. KaiA binds oxidized quinones via its N-terminal PsR domain and is able to sense redox signals directly; quinone analog DBMIB (2,5-dibromo-3-methyl-6-isopropyl-p-benzoquinone) blocks KaiA stimulation of KaiC phosphorylation. The homodimer binds up to 8 quinones in the crystal structure, 3 in the PsR domain and 1 via the C-terminal helical bundle. Binding of oxidized quinone to the KaiA C-terminal domain reduces the phosphorylation of KaiC slightly; quinones may interact in a complex manner with KaiA to mediate clock input. The polypeptide is Circadian clock oscillator protein KaiA (Synechococcus elongatus (strain ATCC 33912 / PCC 7942 / FACHB-805) (Anacystis nidulans R2)).